The primary structure comprises 904 residues: Myelin regulatory factor-like protein (904 aa).

Residues 46–132 form a disordered region; the sequence is LQRQLPDTPP…ATCRHQTGPS (87 aa). The segment covering 100 to 117 has biased composition (polar residues); it reads PSQSMAGQTHSSFQNGYP. The NDT80 DNA-binding region spans 108 to 400; that stretch reads THSSFQNGYP…SNPGQFENDS (293 aa). In terms of domain architecture, Peptidase S74 spans 446 to 554; it reads SDSRVKENIQ…KLTNNLEERI (109 aa). Residues 538-575 adopt a coiled-coil conformation; it reads GAVKQLCKLTNNLEERIEELEIWNKKLARLKRLSSSWK. The chain crosses the membrane as a helical span at residues 624–644; sequence LVVVLIAVMAFCALTIVALYI. The disordered stretch occupies residues 656 to 688; that stretch reads NLPLSNMTSSPEPALSSTAPTSAPHTTPETTQT. The span at 663-688 shows a compositional bias: low complexity; the sequence is TSSPEPALSSTAPTSAPHTTPETTQT.

It belongs to the MRF family.

The protein resides in the membrane. The polypeptide is Myelin regulatory factor-like protein (Myrfl) (Mus musculus (Mouse)).